A 164-amino-acid polypeptide reads, in one-letter code: Transcription elongation factor GreA (164 aa).

Positions 12–38 form a coiled coil; the sequence is RRLERELERLKKERPGVILAIKEAREE.

This sequence belongs to the GreA/GreB family.

Its function is as follows. Necessary for efficient RNA polymerase transcription elongation past template-encoded arresting sites. The arresting sites in DNA have the property of trapping a certain fraction of elongating RNA polymerases that pass through, resulting in locked ternary complexes. Cleavage of the nascent transcript by cleavage factors such as GreA or GreB allows the resumption of elongation from the new 3'terminus. GreA releases sequences of 2 to 3 nucleotides. In Solidesulfovibrio magneticus (strain ATCC 700980 / DSM 13731 / RS-1) (Desulfovibrio magneticus), this protein is Transcription elongation factor GreA.